The chain runs to 312 residues: Homoserine O-acetyltransferase (312 aa).

Residue Cys-142 is the Acyl-thioester intermediate of the active site. 2 residues coordinate substrate: Lys-163 and Ser-194. The active-site Proton acceptor is the His-237. The active site involves Glu-239. Arg-251 is a binding site for substrate.

Belongs to the MetA family.

It is found in the cytoplasm. It carries out the reaction L-homoserine + acetyl-CoA = O-acetyl-L-homoserine + CoA. Its pathway is amino-acid biosynthesis; L-methionine biosynthesis via de novo pathway; O-acetyl-L-homoserine from L-homoserine: step 1/1. Functionally, transfers an acetyl group from acetyl-CoA to L-homoserine, forming acetyl-L-homoserine. The protein is Homoserine O-acetyltransferase of Catenibacterium mitsuokai (strain DSM 15897 / JCM 10609 / CCUG 48821 A / CIP 106738 / RCA14-39).